A 280-amino-acid polypeptide reads, in one-letter code: Probable S-methyl-5'-thioinosine phosphorylase (280 aa).

Phosphate contacts are provided by residues T8 and R50–H51. M175 is a binding site for substrate. Phosphate is bound at residue T176. Residue N199–A201 participates in substrate binding.

The protein belongs to the PNP/MTAP phosphorylase family. MTAP subfamily. In terms of assembly, homotrimer.

The catalysed reaction is S-methyl-5'-thioinosine + phosphate = 5-(methylsulfanyl)-alpha-D-ribose 1-phosphate + hypoxanthine. Its pathway is purine metabolism; purine nucleoside salvage. Functionally, catalyzes the reversible phosphorylation of S-methyl-5'-thioinosine (MTI) to hypoxanthine and 5-methylthioribose-1-phosphate. Involved in the breakdown of S-methyl-5'-thioadenosine (MTA), a major by-product of polyamine biosynthesis. Catabolism of (MTA) occurs via deamination to MTI and phosphorolysis to hypoxanthine. The chain is Probable S-methyl-5'-thioinosine phosphorylase from Methanothermobacter thermautotrophicus (strain ATCC 29096 / DSM 1053 / JCM 10044 / NBRC 100330 / Delta H) (Methanobacterium thermoautotrophicum).